The following is a 310-amino-acid chain: Olfactory receptor 7A42 (310 aa).

Residues 1–25 (MESGNSTRRIPSFFLLGFSENPHLQ) lie on the Extracellular side of the membrane. Residue asparagine 5 is glycosylated (N-linked (GlcNAc...) asparagine). The chain crosses the membrane as a helical span at residues 26 to 46 (FLIFVLFLSMYLVTVLGNLLI). At 47–67 (IMVIITQSPLHTPMYFFLANL) the chain is on the cytoplasmic side. A helical transmembrane segment spans residues 68–88 (SFVDICFTSTTVPKMLVNIQT). At 89–100 (QSKAITYADCIS) the chain is on the extracellular side. Cysteine 98 and cysteine 190 form a disulfide bridge. The helical transmembrane segment at 101-121 (QMSVFLVFAELDNFLLAVMAY) threads the bilayer. Residues 122–135 (DRYVAICHPLYYTF) lie on the Cytoplasmic side of the membrane. The chain crosses the membrane as a helical span at residues 136 to 156 (IVNQHLCILMVLLSWVVSILH). At 157 to 202 (AFLQSSIVLQLTFCGDVKIPHFFCELNQLSQLTCLDSLSSHLIMNL) the chain is on the extracellular side. Residues 203 to 223 (VPVLLAVISFSSILYSYFKIV) form a helical membrane-spanning segment. Residues 224 to 240 (SSICSISSVQGKYTAFS) lie on the Cytoplasmic side of the membrane. Residues 241–261 (TCVSHLSIVFLFYSTGLGVYV) traverse the membrane as a helical segment. Residues 262 to 272 (SSAVVQSSHSA) are Extracellular-facing. A helical transmembrane segment spans residues 273-293 (ARASVMYTVVTPMLNPFIYSL). Residues 294–310 (RNKDVKKALERLLEGKL) are Cytoplasmic-facing.

This sequence belongs to the G-protein coupled receptor 1 family.

The protein localises to the cell membrane. In terms of biological role, odorant receptor. This Mus musculus (Mouse) protein is Olfactory receptor 7A42.